A 370-amino-acid polypeptide reads, in one-letter code: Cytochrome b (370 aa).

4 helical membrane passes run 25-45, 69-90, 105-125, and 170-190; these read FGSMLLACLTLQLLTGFFLAV, WMMQNLHAIGASMFFICIYIHI, WLSGTTLLIMLMATAFFGYVL, and FFALHFILPFGIISLSSLHIL. Heme b-binding residues include His75 and His89. Residues His174 and His188 each coordinate heme b. His193 contacts a ubiquinone. 4 helical membrane-spanning segments follow: residues 218–238, 280–300, 312–332, and 339–358; these read YKDMLMLTIMTIMLLTIVSFF, LGGALALTMSIMMLLTLPFTH, LMQLTFWTFTATFLVISWTAT, and FTTISQVAALMYFLFFISNP.

Belongs to the cytochrome b family. The cytochrome bc1 complex contains 3 respiratory subunits (MT-CYB, CYC1 and UQCRFS1), 2 core proteins (UQCRC1 and UQCRC2) and probably 6 low-molecular weight proteins. Heme b is required as a cofactor.

The protein localises to the mitochondrion inner membrane. Its function is as follows. Component of the ubiquinol-cytochrome c reductase complex (complex III or cytochrome b-c1 complex) that is part of the mitochondrial respiratory chain. The b-c1 complex mediates electron transfer from ubiquinol to cytochrome c. Contributes to the generation of a proton gradient across the mitochondrial membrane that is then used for ATP synthesis. This Chilabothrus strigilatus strigilatus (New Providence boa constrictor) protein is Cytochrome b (MT-CYB).